The following is a 611-amino-acid chain: DNA mismatch repair protein MutL (611 aa).

The disordered stretch occupies residues 353-387; sequence NRQAAGGNHFATPAPAAAPRPASTASSSWQRQEPV. Low complexity predominate over residues 363–380; that stretch reads ATPAPAAAPRPASTASSS.

It belongs to the DNA mismatch repair MutL/HexB family.

In terms of biological role, this protein is involved in the repair of mismatches in DNA. It is required for dam-dependent methyl-directed DNA mismatch repair. May act as a 'molecular matchmaker', a protein that promotes the formation of a stable complex between two or more DNA-binding proteins in an ATP-dependent manner without itself being part of a final effector complex. This Erwinia tasmaniensis (strain DSM 17950 / CFBP 7177 / CIP 109463 / NCPPB 4357 / Et1/99) protein is DNA mismatch repair protein MutL.